The sequence spans 448 residues: MKKTLRFAAVASGLVASLITVAPSASAQALRAQGASLADEVVAVVNNDVITGRELDQRVGLIARRLQQQKAPVPPTDQLRAQVLNQMVLERIQVQRAKDDGIVVDNATVQATLGRLAQANGMQLDQYKARIEAQGVPWDLFVRDARTELMLSKLREKEVDSKITVSDAEVASYIASQRGPNAGSQQDLRLEHIFVKAPANAPQADIDVAQKKAEGLLQQALASGANFERLAKNQSEADDAKKGGDLGFKSPASLPSDVVDAVSKLRPGEVNPTLIRVPDGFEIVRLVERRASQNPAASPKIVQTHVRHILLRVGEGKSESQARQQLIDIRRQIESGGDFEKFARTYSQDGSASQGGDLGWISPGEPVPEFERAMNTLQDGQVSNPVRTEYGYHLIQVLGRRDAEGSVQQQMDIARQAIGQRKAEQAYSDWLRELRDSSYVQIKLPVAQ.

The first 27 residues, 1 to 27 (MKKTLRFAAVASGLVASLITVAPSASA), serve as a signal peptide directing secretion. PpiC domains follow at residues 185 to 288 (QQDL…RLVE) and 301 to 399 (IVQT…QVLG).

It is found in the periplasm. It carries out the reaction [protein]-peptidylproline (omega=180) = [protein]-peptidylproline (omega=0). Chaperone involved in the correct folding and assembly of outer membrane proteins. Recognizes specific patterns of aromatic residues and the orientation of their side chains, which are found more frequently in integral outer membrane proteins. May act in both early periplasmic and late outer membrane-associated steps of protein maturation. The protein is Chaperone SurA of Burkholderia mallei (strain ATCC 23344).